We begin with the raw amino-acid sequence, 243 residues long: Alanyl-tRNA editing protein AlaX-M (243 aa).

4 residues coordinate Zn(2+): His-105, His-109, Cys-208, and His-212.

The protein belongs to the class-II aminoacyl-tRNA synthetase family. Editing domain AlaX-M subfamily. Requires Zn(2+) as cofactor.

The protein resides in the cytoplasm. In terms of biological role, functions in trans to edit the amino acid moiety from incorrectly charged Ser-tRNA(Ala) or Gly-tRNA(Ala). Has no activity on incorrectly charged Ser-tRNA(Thr), nor on correctly charged Ala-tRNA(Ala) or Ser-tRNA(Ser). The chain is Alanyl-tRNA editing protein AlaX-M (alaXM) from Methanosarcina barkeri (strain Fusaro / DSM 804).